The primary structure comprises 271 residues: Ribonuclease 3 (271 aa).

An RNase III domain is found at 5–139 (PALLELKLDY…IMAAIYLDGG (135 aa)). Residue Glu52 participates in Mg(2+) binding. The active site involves Asp56. The Mg(2+) site is built by Asp125 and Glu128. Glu128 is a catalytic residue. The region spanning 172–241 (NFKSALQELA…ARGLYERLMG (70 aa)) is the DRBM domain. The tract at residues 241 to 271 (GDPIVPLPDDSPGDSPDDSGDAAESGVISAT) is disordered. Residues 251-261 (SPGDSPDDSGD) are compositionally biased toward acidic residues.

Belongs to the ribonuclease III family. In terms of assembly, homodimer. Requires Mg(2+) as cofactor.

It is found in the cytoplasm. It catalyses the reaction Endonucleolytic cleavage to 5'-phosphomonoester.. Functionally, digests double-stranded RNA. Involved in the processing of primary rRNA transcript to yield the immediate precursors to the large and small rRNAs (23S and 16S). Processes some mRNAs, and tRNAs when they are encoded in the rRNA operon. Processes pre-crRNA and tracrRNA of type II CRISPR loci if present in the organism. The chain is Ribonuclease 3 from Solibacter usitatus (strain Ellin6076).